A 104-amino-acid polypeptide reads, in one-letter code: Replication restart protein PriB (104 aa).

In terms of domain architecture, SSB spans 1–101 (MTNRLALSGT…LHAEQIELID (101 aa)).

Belongs to the PriB family. In terms of assembly, homodimer. Interacts with PriA and DnaT. Component of the replication restart primosome. Primosome assembly occurs via a 'hand-off' mechanism. PriA binds to replication forks, subsequently PriB then DnaT bind; DnaT then displaces ssDNA to generate the helicase loading substrate.

Its function is as follows. Involved in the restart of stalled replication forks, which reloads the replicative helicase on sites other than the origin of replication; the PriA-PriB pathway is the major replication restart pathway. During primosome assembly it facilitates complex formation between PriA and DnaT on DNA; stabilizes PriA on DNA. Stimulates the DNA unwinding activity of PriA helicase. In Citrobacter koseri (strain ATCC BAA-895 / CDC 4225-83 / SGSC4696), this protein is Replication restart protein PriB.